A 298-amino-acid polypeptide reads, in one-letter code: 4-hydroxy-tetrahydrodipicolinate synthase (298 aa).

A pyruvate-binding site is contributed by T51. Y139 functions as the Proton donor/acceptor in the catalytic mechanism. Catalysis depends on K167, which acts as the Schiff-base intermediate with substrate. I209 lines the pyruvate pocket.

This sequence belongs to the DapA family. As to quaternary structure, homotetramer; dimer of dimers.

It localises to the cytoplasm. It carries out the reaction L-aspartate 4-semialdehyde + pyruvate = (2S,4S)-4-hydroxy-2,3,4,5-tetrahydrodipicolinate + H2O + H(+). The protein operates within amino-acid biosynthesis; L-lysine biosynthesis via DAP pathway; (S)-tetrahydrodipicolinate from L-aspartate: step 3/4. Its function is as follows. Catalyzes the condensation of (S)-aspartate-beta-semialdehyde [(S)-ASA] and pyruvate to 4-hydroxy-tetrahydrodipicolinate (HTPA). The polypeptide is 4-hydroxy-tetrahydrodipicolinate synthase (Haemophilus influenzae (strain PittEE)).